The sequence spans 803 residues: Carbon monoxide dehydrogenase large chain (803 aa).

R384 carries the post-translational modification 4-hydroxyarginine. Residue C385 coordinates Cu(+). E757 provides a ligand contact to Mo-molybdopterin cytosine dinucleotide.

Dimer of heterotrimers. Each heterotrimer consists of a large, a medium and a small subunit. Requires Cu(+) as cofactor. The cofactor is Mo-molybdopterin cytosine dinucleotide.

The catalysed reaction is CO + a quinone + H2O = a quinol + CO2. Catalyzes the oxidation of carbon monoxide to carbon dioxide. This is Carbon monoxide dehydrogenase large chain (cutL) from Hydrogenophaga pseudoflava (Pseudomonas carboxydoflava).